A 104-amino-acid chain; its full sequence is L-rhamnose mutarotase (104 aa).

Tyr-18 contacts substrate. Catalysis depends on His-22, which acts as the Proton donor. Substrate-binding positions include Tyr-41 and Trp-76–Trp-77.

The protein belongs to the rhamnose mutarotase family. In terms of assembly, homodimer.

It is found in the cytoplasm. The enzyme catalyses alpha-L-rhamnose = beta-L-rhamnose. Its pathway is carbohydrate metabolism; L-rhamnose metabolism. Involved in the anomeric conversion of L-rhamnose. This chain is L-rhamnose mutarotase, found in Klebsiella pneumoniae subsp. pneumoniae (strain ATCC 700721 / MGH 78578).